Reading from the N-terminus, the 99-residue chain is Small ribosomal subunit protein uS19 (99 aa).

Residues 76–99 (PTRSFRGHAGGGKAEKGGSAPRKK) form a disordered region.

The protein belongs to the universal ribosomal protein uS19 family.

Its function is as follows. Protein S19 forms a complex with S13 that binds strongly to the 16S ribosomal RNA. The sequence is that of Small ribosomal subunit protein uS19 from Pelodictyon phaeoclathratiforme (strain DSM 5477 / BU-1).